The sequence spans 239 residues: Uridylate kinase (239 aa).

ATP is bound at residue 13-16 (KVSG). Gly55 provides a ligand contact to UMP. ATP contacts are provided by Gly56 and Arg60. UMP contacts are provided by residues Asp75 and 136 to 143 (TGNPFCTT). ATP is bound by residues Thr163, Gln164, Tyr169, and Asp172.

This sequence belongs to the UMP kinase family. Homohexamer.

Its subcellular location is the cytoplasm. The catalysed reaction is UMP + ATP = UDP + ADP. The protein operates within pyrimidine metabolism; CTP biosynthesis via de novo pathway; UDP from UMP (UMPK route): step 1/1. Its activity is regulated as follows. Inhibited by UTP. In terms of biological role, catalyzes the reversible phosphorylation of UMP to UDP. In Rickettsia bellii (strain RML369-C), this protein is Uridylate kinase.